A 674-amino-acid polypeptide reads, in one-letter code: MVHLNKTIQEGDNPDLTAERLTATFDTHAMAAQIYGGEMRARRRREITAKLAEIPELHDSMPLPYMTREEKIMESARKLTVLTQRMSEIIDPTDAGELYHLNNEVLGIEGNPMALHGVMFIPALNAQASDEQQAKWLIRALRREIIGTYAQTEMGHGTNLQNLETTATYDIGTQEFVLHTPKITALKWWPGNLGKSSNYAVVVAHMYIKGKNFGPHTFMVPLRDEKTHKPLPGITIGDIGPKMAYNIVDNGFLGFNNYRIPRTNLLMRHTKVEADGTYIKPPHAKINYSAMVHVRSYMLTGQAIMLSYALNIATRYSAVRRQGQIDKNEPEVKVLEYQTQQHRLFPFIARAYAFQFAGAETVKLYERVLKEMKSGNVSLMADLHALTSGLKSVVTHQTGEGIEQARMACGGHGYSMASYISEIYGVAIGGCTYEGENMVMLLQLARYLVKSAALVKSGKASQLGPLVAYLGARSEPTSLIDRVPNGGITEYIKTFQHIAKRQTLKAANKFFGLMENGEKREIAWNKSSVELNRASRLHTRLFIVEAFARRVNEIGDITIKEALSDLLHLHVNYELLDVATYALEDGFMSSTQLDYVRDQLYFYLQKIRPNAVSLLDSWEFSDRELRSVLGRRDGHVYENLFKWAKESPLNKTDVLPSVDTYLKPMMEKARQSKL.

Residues 149–152 (YAQT), 157–158 (GT), and Gly191 each bind FAD. Substrate-binding positions include 285 to 288 (KINY) and Arg295. FAD contacts are provided by residues Arg320 and 340–343 (QQHR). The ATP site is built by His342, Ser392, His396, and Gln404. Gly411 is an FAD binding site. 433–434 (YE) serves as a coordination point for substrate. Glu434 serves as the catalytic Proton acceptor. Glu436 is a binding site for FAD. Residues 533 to 536 (RASR) and Tyr581 each bind ATP. A Microbody targeting signal motif is present at residues 672 to 674 (SKL).

Belongs to the acyl-CoA oxidase family. As to quaternary structure, homodimer. Forms a heterodimer with acox-1.2. Forms a heterodimer with acox-1.3; the interaction may be important for the stability of acox-1.3. FAD serves as cofactor. In terms of tissue distribution, expressed in hypodermis and intestine.

The protein localises to the peroxisome. It catalyses the reaction nonanoyl-CoA + O2 = (2E)-nonenoyl-CoA + H2O2. The catalysed reaction is dodecanoyl-CoA + O2 = (2E)-dodecenoyl-CoA + H2O2. It carries out the reaction a 2,3-saturated acyl-CoA + O2 = a (2E)-enoyl-CoA + H2O2. The enzyme catalyses heptanoyl-CoA + O2 = (2E)-heptenoyl-CoA + H2O2. It catalyses the reaction (8R)-8-hydroxynonanoyl-CoA + O2 = (2E,8R)-8-hydroxynonenoyl-CoA + H2O2. The catalysed reaction is pentanoyl-CoA + O2 = (2E)-pentenoyl-CoA + H2O2. It carries out the reaction hexadecanoyl-CoA + O2 = (2E)-hexadecenoyl-CoA + H2O2. The enzyme catalyses IC-asc-C7-CoA + O2 = IC-asc-DeltaC7-CoA + H2O2. It catalyses the reaction IC-asc-C9-CoA + O2 = IC-asc-DeltaC9-CoA + H2O2. The catalysed reaction is asc-omegaC5-CoA + O2 = asc-omegaDeltaC5-CoA + H2O2. It carries out the reaction asc-C7-CoA + O2 = asc-DeltaC7-CoA + H2O2. The enzyme catalyses asc-omegaC7-CoA + O2 = asc-omegaDeltaC7-CoA + H2O2. It catalyses the reaction asc-C9-CoA + O2 = asc-DeltaC9-CoA + H2O2. The catalysed reaction is asc-C13-CoA + O2 = asc-DeltaC13-CoA + H2O2. It functions in the pathway lipid metabolism; peroxisomal fatty acid beta-oxidation. Activated by ATP. ATP binding leads to a conformational change that promotes FAD cofactor binding and enzyme activity. ATP binding likely occurs during acox-1.1 folding and/or dimer formation. Functionally, involved in the first step of peroxisomal beta-oxidation by catalyzing the desaturation of fatty acid-derived side chains. Specifically, catalyzes the desaturation of fatty acids heptanoyl-CoA (C7), nonanoyl-CoA (C9), dodecanoyl-CoA (C12) and to a lesser extent pentanoyl-CoA (C5) and hexadecanoyl-CoA (C16), and hydroxylated fatty acid hydroxynonanoyl-CoA. Also, catalyzes the desaturation fatty acid-derived side chains of ascaroside pheromones, which regulates development and behavior. Specifically, shortens ascaroside with 5-carbon omega side chain (asc-omega-C5), 7-carbon side chain (asc-C7), 9-carbon side chain (asc-C9), 11-carbon side chain (asc-C11), 13-carbon side chain (asc-C13), 15-carbon side chain (asc-C15) and to a lesser extent ascarosides with 7-omega-carbon side chain (asc-omega-C7). Also shortens indol-3-carbonyl(IC)-ascarosides with 7-carbon side chain (IC-asc-C7) and to a lesser extent (IC)-ascarosides with 9-carbon side chain (IC-asc-C9). May associate and regulate the folding and/or the catalytic activity of other acyl-coenzyme A oxidases including acox-1.2, acox-1.3, acox-1.4 and acox-3 modulating the type of ascarosides produced. In association with acox-1.3, catalyzes the desaturation of asc-C7-CoA but not of fatty acids or hydroxylated fatty acids. Involved in the biosynthesis of asc-C6-MK (daumone 2) and asc-delta-C9 (daumone 3) but not asc-C7 (daumone 1); daumones are pheromones produced during unfavourable growth conditions which promote entry into the dauer stage. This is Acyl-coenzyme A oxidase acox-1.1 from Caenorhabditis elegans.